Consider the following 355-residue polypeptide: Tetraacyldisaccharide 4'-kinase (355 aa).

Ser49 to Thr56 serves as a coordination point for ATP.

It belongs to the LpxK family.

It carries out the reaction a lipid A disaccharide + ATP = a lipid IVA + ADP + H(+). The protein operates within glycolipid biosynthesis; lipid IV(A) biosynthesis; lipid IV(A) from (3R)-3-hydroxytetradecanoyl-[acyl-carrier-protein] and UDP-N-acetyl-alpha-D-glucosamine: step 6/6. Its function is as follows. Transfers the gamma-phosphate of ATP to the 4'-position of a tetraacyldisaccharide 1-phosphate intermediate (termed DS-1-P) to form tetraacyldisaccharide 1,4'-bis-phosphate (lipid IVA). This is Tetraacyldisaccharide 4'-kinase from Chlorobium phaeobacteroides (strain DSM 266 / SMG 266 / 2430).